Reading from the N-terminus, the 133-residue chain is Holo-[acyl-carrier-protein] synthase (133 aa).

D8 and E57 together coordinate Mg(2+).

Belongs to the P-Pant transferase superfamily. AcpS family. Mg(2+) is required as a cofactor.

The protein resides in the cytoplasm. It carries out the reaction apo-[ACP] + CoA = holo-[ACP] + adenosine 3',5'-bisphosphate + H(+). Its function is as follows. Transfers the 4'-phosphopantetheine moiety from coenzyme A to a Ser of acyl-carrier-protein. In Parvibaculum lavamentivorans (strain DS-1 / DSM 13023 / NCIMB 13966), this protein is Holo-[acyl-carrier-protein] synthase.